The following is a 372-amino-acid chain: Glutamate 5-kinase (372 aa).

Lysine 14 is an ATP binding site. Residues serine 54, aspartate 141, and asparagine 153 each contribute to the substrate site. 173–174 provides a ligand contact to ATP; it reads TD. The PUA domain occupies 280–358; it reads RGHVVIDAGA…GEIETVLGYM (79 aa).

This sequence belongs to the glutamate 5-kinase family.

It is found in the cytoplasm. It catalyses the reaction L-glutamate + ATP = L-glutamyl 5-phosphate + ADP. The protein operates within amino-acid biosynthesis; L-proline biosynthesis; L-glutamate 5-semialdehyde from L-glutamate: step 1/2. Catalyzes the transfer of a phosphate group to glutamate to form L-glutamate 5-phosphate. The sequence is that of Glutamate 5-kinase from Burkholderia vietnamiensis (strain G4 / LMG 22486) (Burkholderia cepacia (strain R1808)).